Reading from the N-terminus, the 137-residue chain is Nucleoside diphosphate kinase (137 aa).

Positions 9, 58, 86, 92, 103, and 113 each coordinate ATP. Histidine 121 (pros-phosphohistidine intermediate) is an active-site residue.

Belongs to the NDK family. In terms of assembly, homotetramer. It depends on Mg(2+) as a cofactor.

The protein resides in the cytoplasm. It carries out the reaction a 2'-deoxyribonucleoside 5'-diphosphate + ATP = a 2'-deoxyribonucleoside 5'-triphosphate + ADP. The catalysed reaction is a ribonucleoside 5'-diphosphate + ATP = a ribonucleoside 5'-triphosphate + ADP. In terms of biological role, major role in the synthesis of nucleoside triphosphates other than ATP. The ATP gamma phosphate is transferred to the NDP beta phosphate via a ping-pong mechanism, using a phosphorylated active-site intermediate. In Streptococcus pneumoniae (strain P1031), this protein is Nucleoside diphosphate kinase.